Here is a 377-residue protein sequence, read N- to C-terminus: MSHGIVIIGSGFAARQLVKNIRKQDANVPLTLIAADSMDEYNKPDLSHVISQSQRADDLTRQTAGEFAEQFHLRLFPYTRVTDIDAAAHCVKAKDKQWHYDKLVLATGASAFVPLIEGHELMLTLNSQQEYKACETRLRDAQRVMIVGGGLIGTELAMDFCRAGKSVTLVDHAARILSALMPAEVSSRLQHRLTDMGVHQLLKSQLQSLTKTDTGIRATLDRNRSVEIDVVVAATGLRPETALARRAGAETHLGVKVDSYLQTTQPDIYALGDCAEINGQVLPFLQPIQISAMYLAKNLLGTSTPLKLPTMLVKVKTPELPLHLAGETQRQDLNWQITLETQGMVARGMDNDGQLRAFVVSEDRMKEAFALLKSLPV.

The protein belongs to the FAD-dependent oxidoreductase family. FAD serves as cofactor.

The protein localises to the cytoplasm. It carries out the reaction 2 reduced [nitric oxide reductase rubredoxin domain] + NAD(+) + H(+) = 2 oxidized [nitric oxide reductase rubredoxin domain] + NADH. The protein operates within nitrogen metabolism; nitric oxide reduction. One of at least two accessory proteins for anaerobic nitric oxide (NO) reductase. Reduces the rubredoxin moiety of NO reductase. The sequence is that of Nitric oxide reductase FlRd-NAD(+) reductase from Enterobacter sp. (strain 638).